A 260-amino-acid polypeptide reads, in one-letter code: Late transcription factor 1 (260 aa).

Belongs to the chordopoxvirinae VLTF-1 family. Interacts with the late transcription factors VLTF-2 and VLTF-3. Interacts with the late transcription elongation factor H5/VLTF-4. Interacts with itself.

Functionally, associates with RNA polymerase to initiate transcription from late gene promoters. The chain is Late transcription factor 1 (VLTF1) from Vertebrata (FPV).